Consider the following 361-residue polypeptide: Putative F-box protein At3g19560 (361 aa).

Residues 3-49 (MTMMSDISQDLLEEILSRVPITSLRAVKSTCKRWKDLLNDPSFSKKY) enclose the F-box domain.

The chain is Putative F-box protein At3g19560 from Arabidopsis thaliana (Mouse-ear cress).